The primary structure comprises 366 residues: Chorismate synthase (366 aa).

NADP(+)-binding residues include R48 and R54. Residues 125-127 (RSS), 238-239 (NA), G278, 293-297 (KPTSS), and R319 each bind FMN.

This sequence belongs to the chorismate synthase family. In terms of assembly, homotetramer. FMNH2 serves as cofactor.

The enzyme catalyses 5-O-(1-carboxyvinyl)-3-phosphoshikimate = chorismate + phosphate. The protein operates within metabolic intermediate biosynthesis; chorismate biosynthesis; chorismate from D-erythrose 4-phosphate and phosphoenolpyruvate: step 7/7. Functionally, catalyzes the anti-1,4-elimination of the C-3 phosphate and the C-6 proR hydrogen from 5-enolpyruvylshikimate-3-phosphate (EPSP) to yield chorismate, which is the branch point compound that serves as the starting substrate for the three terminal pathways of aromatic amino acid biosynthesis. This reaction introduces a second double bond into the aromatic ring system. This chain is Chorismate synthase, found in Burkholderia multivorans (strain ATCC 17616 / 249).